Here is a 423-residue protein sequence, read N- to C-terminus: Serine--tRNA ligase (423 aa).

230–232 provides a ligand contact to L-serine; the sequence is TAE. 261–263 contributes to the ATP binding site; that stretch reads RQE. An L-serine-binding site is contributed by glutamate 284. 348–351 contacts ATP; sequence EISS. Serine 384 is an L-serine binding site.

Belongs to the class-II aminoacyl-tRNA synthetase family. Type-1 seryl-tRNA synthetase subfamily. Homodimer. The tRNA molecule binds across the dimer.

It is found in the cytoplasm. The catalysed reaction is tRNA(Ser) + L-serine + ATP = L-seryl-tRNA(Ser) + AMP + diphosphate + H(+). It carries out the reaction tRNA(Sec) + L-serine + ATP = L-seryl-tRNA(Sec) + AMP + diphosphate + H(+). It participates in aminoacyl-tRNA biosynthesis; selenocysteinyl-tRNA(Sec) biosynthesis; L-seryl-tRNA(Sec) from L-serine and tRNA(Sec): step 1/1. In terms of biological role, catalyzes the attachment of serine to tRNA(Ser). Is also able to aminoacylate tRNA(Sec) with serine, to form the misacylated tRNA L-seryl-tRNA(Sec), which will be further converted into selenocysteinyl-tRNA(Sec). This is Serine--tRNA ligase from Thermoanaerobacter pseudethanolicus (strain ATCC 33223 / 39E) (Clostridium thermohydrosulfuricum).